Consider the following 97-residue polypeptide: Aspartyl/glutamyl-tRNA(Asn/Gln) amidotransferase subunit C (97 aa).

Belongs to the GatC family. Heterotrimer of A, B and C subunits.

It catalyses the reaction L-glutamyl-tRNA(Gln) + L-glutamine + ATP + H2O = L-glutaminyl-tRNA(Gln) + L-glutamate + ADP + phosphate + H(+). The enzyme catalyses L-aspartyl-tRNA(Asn) + L-glutamine + ATP + H2O = L-asparaginyl-tRNA(Asn) + L-glutamate + ADP + phosphate + 2 H(+). Allows the formation of correctly charged Asn-tRNA(Asn) or Gln-tRNA(Gln) through the transamidation of misacylated Asp-tRNA(Asn) or Glu-tRNA(Gln) in organisms which lack either or both of asparaginyl-tRNA or glutaminyl-tRNA synthetases. The reaction takes place in the presence of glutamine and ATP through an activated phospho-Asp-tRNA(Asn) or phospho-Glu-tRNA(Gln). This chain is Aspartyl/glutamyl-tRNA(Asn/Gln) amidotransferase subunit C, found in Synechococcus sp. (strain CC9605).